A 505-amino-acid chain; its full sequence is uncharacterized protein (505 aa).

Polar residues predominate over residues 1 to 16; that stretch reads MPPTASLTRSPPTASQ. The tract at residues 1 to 474 is disordered; the sequence is MPPTASLTRS…TPPTASLTRT (474 aa). Composition is skewed to low complexity over residues 17-33 and 40-59; these read TRTL…PRAS and TASL…PPRA. A compositionally biased stretch (polar residues) spans 66 to 78; the sequence is SRASLTRTLSRAS. Low complexity-rich tracts occupy residues 96–122, 129–140, and 147–158; these read SLTR…PPRT, PRTSQTRTPPRA, and SRASRTRTPPRA. Polar residues-rich tracts occupy residues 165 to 177 and 188 to 200; these read SRAS…SRAS and TRTP…TRTP. Residues 201 to 226 show a composition bias toward low complexity; it reads PTASLTRASRTRTPPRTSQTRTPPRA. 7 stretches are compositionally biased toward polar residues: residues 233–254, 265–293, 309–329, 345–365, 373–383, 399–408, and 435–448; these read SRAS…SRAS, TRTP…SLTR, LTRT…SLTR, TRTPSRASLTR, LTRSPPTASL, and LTRS…TRTP. Residues 453–474 are compositionally biased toward low complexity; it reads LRRTPPRTSLTRTPPTASLTRT.

This is an uncharacterized protein from Homo sapiens (Human).